The primary structure comprises 230 residues: 5'-methylthioadenosine/S-adenosylhomocysteine nucleosidase (230 aa).

The active-site Proton acceptor is Glu-12. Residues Gly-78, Ile-153, and 174 to 175 each bind substrate; that span reads ME. Asp-198 (proton donor) is an active-site residue.

It belongs to the PNP/UDP phosphorylase family. MtnN subfamily.

The enzyme catalyses S-adenosyl-L-homocysteine + H2O = S-(5-deoxy-D-ribos-5-yl)-L-homocysteine + adenine. It carries out the reaction S-methyl-5'-thioadenosine + H2O = 5-(methylsulfanyl)-D-ribose + adenine. It catalyses the reaction 5'-deoxyadenosine + H2O = 5-deoxy-D-ribose + adenine. It functions in the pathway amino-acid biosynthesis; L-methionine biosynthesis via salvage pathway; S-methyl-5-thio-alpha-D-ribose 1-phosphate from S-methyl-5'-thioadenosine (hydrolase route): step 1/2. Functionally, catalyzes the irreversible cleavage of the glycosidic bond in both 5'-methylthioadenosine (MTA) and S-adenosylhomocysteine (SAH/AdoHcy) to adenine and the corresponding thioribose, 5'-methylthioribose and S-ribosylhomocysteine, respectively. Also cleaves 5'-deoxyadenosine, a toxic by-product of radical S-adenosylmethionine (SAM) enzymes, into 5-deoxyribose and adenine. The polypeptide is 5'-methylthioadenosine/S-adenosylhomocysteine nucleosidase (Shewanella denitrificans (strain OS217 / ATCC BAA-1090 / DSM 15013)).